The chain runs to 324 residues: Transmembrane protein 171 (324 aa).

The next 4 membrane-spanning stretches (helical) occupy residues 22-42 (IFCFFVFGAVLLCVGVLLSIF), 57-77 (MVLKVAGPACAVVGLGAVILA), 113-133 (LIFGFLFLTSGMLISVLGIWV), and 160-180 (FLSLQIMGPLIVLVGLCFFVV). Over residues 229-239 (PESSASAVAES) the composition is skewed to low complexity. 2 disordered regions span residues 229–248 (PESSASAVAESPGTNSLLPN) and 279–304 (YTISGTNSSSEASHTPHLPSELPPRY). The segment covering 279-291 (YTISGTNSSSEAS) has biased composition (polar residues).

Its subcellular location is the membrane. This is Transmembrane protein 171 (TMEM171) from Homo sapiens (Human).